The primary structure comprises 781 residues: MAP7 domain-containing protein 2 (781 aa).

A compositionally biased stretch (gly residues) spans 1–32; the sequence is MERSGGNGGGGGGGGGGGGGYGGSGGGGGGAG. Disordered stretches follow at residues 1-37, 50-87, 120-567, and 597-628; these read MERS…PSEG, AEAA…REER, LEEQ…AAKQ, and TRKS…ANKA. 2 stretches are compositionally biased toward basic and acidic residues: residues 71 to 87 and 120 to 158; these read LKSD…REER and LEEQ…RSLE. The stretch at 73 to 168 forms a coiled coil; that stretch reads SDERQRLAKE…RTQQLELKKK (96 aa). The segment covering 192-210 has biased composition (low complexity); the sequence is LTLATSTPPLDTGTTTAAA. Composition is skewed to polar residues over residues 211-245 and 257-267; these read ESTN…TVAI and LKSSYKSSPTR. Residues 318–328 show a composition bias toward basic and acidic residues; that stretch reads RRCEPPEDISK. The span at 329–348 shows a compositional bias: polar residues; it reads RLSSPVKSKITSKTYPQSPK. Basic and acidic residues-rich tracts occupy residues 370-387, 397-436, 453-567, and 597-613; these read ETPK…EKEG, PREE…EHSA, LAEK…AAKQ, and TRKS…DPKV.

Belongs to the MAP7 family. Interacts (via N-terminus) with microtubules; facilitates microtubule stabilization. Interacts with kinesin-1 family members, KIF5A, KIF5B and KIF5C. In terms of tissue distribution, expressed predominantly in the glomerular layer of the olfactory bulb and Sertoli cells of the testis.

It localises to the cytoplasm. The protein localises to the cytoskeleton. The protein resides in the microtubule organizing center. Its subcellular location is the centrosome. It is found in the midbody. It localises to the cell projection. The protein localises to the neuron projection. The protein resides in the axon. Functionally, microtubule-stabilizing protein involved in the control of cell motility and neurite outgrowth. Acts as a critical cofactor for kinesin transport; in the proximal axon regulates kinesin-1 family members, KIF5A, KIF5B and KIF5C recruitment to microtubules and contributes to kinesin-1-mediated transport in the axons. The protein is MAP7 domain-containing protein 2 (Map7d2) of Mus musculus (Mouse).